A 306-amino-acid chain; its full sequence is Agmatinase (306 aa).

Positions 126, 149, 151, 153, 230, and 232 each coordinate Mn(2+).

The protein belongs to the arginase family. Agmatinase subfamily. Mn(2+) serves as cofactor.

It carries out the reaction agmatine + H2O = urea + putrescine. It participates in amine and polyamine biosynthesis; putrescine biosynthesis via agmatine pathway; putrescine from agmatine: step 1/1. Catalyzes the formation of putrescine from agmatine. The sequence is that of Agmatinase from Serratia proteamaculans (strain 568).